We begin with the raw amino-acid sequence, 1298 residues long: Phosphoribosylformylglycinamidine synthase (1298 aa).

Residues 298-328 (TAIAPFPGASTGSGGEIRDEGATGRGAKPKA) form a disordered region. ATP is bound by residues 305–316 (GASTGSGGEIRD), 384–386 (TGY), and alanine 676. Mg(2+) is bound by residues aspartate 677, glutamate 716, asparagine 720, and aspartate 884. ATP is bound at residue serine 886. A Glutamine amidotransferase type-1 domain is found at 1045-1298 (VAILREQGVN…MFRNARVWVD (254 aa)). Cysteine 1138 functions as the Nucleophile in the catalytic mechanism. Active-site residues include histidine 1263 and glutamate 1265.

In the N-terminal section; belongs to the FGAMS family. As to quaternary structure, monomer.

It localises to the cytoplasm. It catalyses the reaction N(2)-formyl-N(1)-(5-phospho-beta-D-ribosyl)glycinamide + L-glutamine + ATP + H2O = 2-formamido-N(1)-(5-O-phospho-beta-D-ribosyl)acetamidine + L-glutamate + ADP + phosphate + H(+). Its pathway is purine metabolism; IMP biosynthesis via de novo pathway; 5-amino-1-(5-phospho-D-ribosyl)imidazole from N(2)-formyl-N(1)-(5-phospho-D-ribosyl)glycinamide: step 1/2. Phosphoribosylformylglycinamidine synthase involved in the purines biosynthetic pathway. Catalyzes the ATP-dependent conversion of formylglycinamide ribonucleotide (FGAR) and glutamine to yield formylglycinamidine ribonucleotide (FGAM) and glutamate. The polypeptide is Phosphoribosylformylglycinamidine synthase (Pseudomonas aeruginosa (strain ATCC 15692 / DSM 22644 / CIP 104116 / JCM 14847 / LMG 12228 / 1C / PRS 101 / PAO1)).